The chain runs to 314 residues: Putative S-adenosyl-L-methionine-dependent methyltransferase MAP_0256 (314 aa).

Residues Asp-132 and 161 to 162 (DL) contribute to the S-adenosyl-L-methionine site.

This sequence belongs to the UPF0677 family.

Functionally, exhibits S-adenosyl-L-methionine-dependent methyltransferase activity. This is Putative S-adenosyl-L-methionine-dependent methyltransferase MAP_0256 from Mycolicibacterium paratuberculosis (strain ATCC BAA-968 / K-10) (Mycobacterium paratuberculosis).